We begin with the raw amino-acid sequence, 396 residues long: Elongation factor Tu (396 aa).

Residues 10-206 (KPHVNVGTIG…ALDSYIPTPE (197 aa)) form the tr-type G domain. Residues 19–26 (GHVDHGKT) are G1. GTP is bound at residue 19–26 (GHVDHGKT). Residue T26 participates in Mg(2+) binding. The segment at 60 to 64 (GITIN) is G2. Positions 81-84 (DCPG) are G3. GTP-binding positions include 81–85 (DCPGH) and 136–139 (NKCD). Positions 136–139 (NKCD) are G4. The tract at residues 174 to 176 (SAK) is G5.

It belongs to the TRAFAC class translation factor GTPase superfamily. Classic translation factor GTPase family. EF-Tu/EF-1A subfamily. Monomer.

The protein localises to the cytoplasm. It carries out the reaction GTP + H2O = GDP + phosphate + H(+). GTP hydrolase that promotes the GTP-dependent binding of aminoacyl-tRNA to the A-site of ribosomes during protein biosynthesis. This Methylibium petroleiphilum (strain ATCC BAA-1232 / LMG 22953 / PM1) protein is Elongation factor Tu.